Reading from the N-terminus, the 361-residue chain is D-alanine--D-alanine ligase (361 aa).

The region spanning 139–336 (KLLLKEKEIS…FSQIIDNMIN (198 aa)) is the ATP-grasp domain. An ATP-binding site is contributed by 167-222 (EKNLGYPMIVKPARLGSSIGVSKVVDRKNFEEAVKNVLLFDNKVLVEKWINAREIN). Residues Asp296, Glu307, and Asn309 each coordinate Mg(2+).

This sequence belongs to the D-alanine--D-alanine ligase family. Requires Mg(2+) as cofactor. It depends on Mn(2+) as a cofactor.

It localises to the cytoplasm. The catalysed reaction is 2 D-alanine + ATP = D-alanyl-D-alanine + ADP + phosphate + H(+). Its pathway is cell wall biogenesis; peptidoglycan biosynthesis. In terms of biological role, cell wall formation. The polypeptide is D-alanine--D-alanine ligase (Thermosipho melanesiensis (strain DSM 12029 / CIP 104789 / BI429)).